The sequence spans 53 residues: Light-harvesting protein B-800/820 alpha chain (53 aa).

At 1 to 14 the chain is on the cytoplasmic side; it reads MNQGKIWTVVNPAV. Residues 15 to 35 form a helical membrane-spanning segment; that stretch reads GLPLLLGSVAITALLVHLAVL. H31 provides a ligand contact to a bacteriochlorophyll. Residues 36–53 lie on the Periplasmic side of the membrane; that stretch reads THTTWFPAFTQGGLKKAA.

This sequence belongs to the antenna complex alpha subunit family. As to quaternary structure, the core complex is formed by different alpha and beta chains, binding bacteriochlorophyll molecules, and arranged most probably in tetrameric structures disposed around the reaction center. The non-pigmented gamma chains may constitute additional components.

It localises to the cell inner membrane. Functionally, antenna complexes are light-harvesting systems, which transfer the excitation energy to the reaction centers. The sequence is that of Light-harvesting protein B-800/820 alpha chain from Rhodoblastus acidophilus (Rhodopseudomonas acidophila).